The sequence spans 555 residues: Cytochrome P450 78A11 (555 aa).

The helical transmembrane segment at 12–32 threads the bilayer; the sequence is VDATWWAYALPALLGADTLCA. Cys495 is a heme binding site.

The protein belongs to the cytochrome P450 family. Requires heme as cofactor. Expressed in seedlings, shoot apices and young panicles, but not in mature leaves, calli and roots.

It is found in the membrane. Functionally, involved in the regular timing (plastochron) of lateral organs formation. May regulate the rate of leaf initiation and the duration of vegetative phase. Seems to be redundant to the function of PLASTOCHRON2, but to act in an independent pathway. This is Cytochrome P450 78A11 (CYP78A11) from Oryza sativa subsp. japonica (Rice).